A 1886-amino-acid polypeptide reads, in one-letter code: Nuclear pore membrane glycoprotein 210 (1886 aa).

The signal sequence occupies residues 1 to 25; that stretch reads MARASLIQPGLWALLLLQAVGPAVA. Over 26–1805 the chain is Perinuclear space; that stretch reads AKLNIPKVLL…GASLLSHFLD (1780 aa). N-linked (GlcNAc...) asparagine glycosylation is found at asparagine 337, asparagine 484, asparagine 681, and asparagine 1039. Residues 1078 to 1151 form the BIG2 domain; the sequence is FPPFRLIPRK…VQAVDAETGK (74 aa). A helical membrane pass occupies residues 1806-1828; sequence SYQVMFFTFFALLAGTAVTIIAY. Over 1829 to 1886 the chain is Cytoplasmic; the sequence is HTVCAPRELASPLALTPHASPQHSPHYLASSPTAFNTLPSDRKASPPSGLWSPAYASH. Serine 1839 carries the phosphoserine modification. Threonine 1844 is subject to Phosphothreonine. The segment at 1866-1886 is disordered; sequence LPSDRKASPPSGLWSPAYASH. Phosphoserine is present on residues serine 1873, serine 1876, serine 1880, and serine 1885.

Belongs to the NUP210 family. In terms of assembly, forms dimers and possibly higher-order oligomers. In terms of processing, N-glycosylated, but not all potential glycosylation sites may be used. Contains high-mannose type oligosaccharides. Post-translationally, phosphorylated at Ser-1880 in mitosis specifically; not phosphorylated in interphase.

The protein resides in the nucleus. It localises to the nuclear pore complex. It is found in the nucleus membrane. The protein localises to the endoplasmic reticulum membrane. Nucleoporin essential for nuclear pore assembly and fusion, nuclear pore spacing, as well as structural integrity. The polypeptide is Nuclear pore membrane glycoprotein 210 (Nup210) (Rattus norvegicus (Rat)).